A 530-amino-acid chain; its full sequence is Neutral amino acid transporter A (530 aa).

An N-acetylmethionine modification is found at Met1. The span at 1 to 10 shows a compositional bias: polar residues; that stretch reads MEKSSETNGY. Positions 1–28 are disordered; that stretch reads MEKSSETNGYLDSAQEGPAAGPGEPGTT. Topologically, residues 1–41 are cytoplasmic; it reads MEKSSETNGYLDSAQEGPAAGPGEPGTTARRAGRCAGFLRR. The span at 16-28 shows a compositional bias: low complexity; sequence EGPAAGPGEPGTT. A run of 3 helical transmembrane segments spans residues 42 to 62, 88 to 108, and 119 to 139; these read HGLVLLTVSGVVAGAGLGAAL, MIILPLVVCSLVSGAASLDAS, and AYFGLTTLGASALAVALAFII. The Extracellular segment spans residues 140–216; the sequence is KPGSGSQTLQ…VTIEKIPIGT (77 aa). Asn201 carries N-linked (GlcNAc...) asparagine glycosylation. Transmembrane regions (helical) follow at residues 217 to 237, 257 to 277, 298 to 318, 328 to 348, 373 to 393, and 418 to 438; these read EIEGMNILGLVLFALVLGVAL, ATMVLVSWIMWYVPVGIMFLV, IFTSILGHFIHGGIVLPLIYF, FLLGLLTPFATAFATCSSSAT, IGATVNMDGAAIFQCVAAVFI, and VGAAGVPAGGVLTIAIILEAI. Residues 488-530 form a disordered region; sequence ELSEVKVEAIPNSKSEEETSPLVTHPNPTGPAASTPESKESVL. Residues Ser507, Ser525, and Ser528 each carry the phosphoserine modification.

It belongs to the dicarboxylate/amino acid:cation symporter (DAACS) (TC 2.A.23) family. SLC1A4 subfamily.

The protein resides in the membrane. It localises to the melanosome. The catalysed reaction is L-threonine(in) + Na(+)(in) = L-threonine(out) + Na(+)(out). It catalyses the reaction L-serine(in) + Na(+)(in) = L-serine(out) + Na(+)(out). The enzyme catalyses L-cysteine(in) + Na(+)(in) = L-cysteine(out) + Na(+)(out). It carries out the reaction L-alanine(in) + Na(+)(in) = L-alanine(out) + Na(+)(out). The catalysed reaction is L-proline(in) + Na(+)(in) = L-proline(out) + Na(+)(out). It catalyses the reaction 4-hydroxy-L-proline(in) + Na(+)(in) = 4-hydroxy-L-proline(out) + Na(+)(out). Its function is as follows. Sodium-dependent neutral amino-acid transporter that mediates transport of alanine, serine, cysteine, proline, hydroxyproline and threonine. This chain is Neutral amino acid transporter A (SLC1A4), found in Bos taurus (Bovine).